Here is a 32-residue protein sequence, read N- to C-terminus: MEALVYTFLLIGTLVVIFFAIFFRDPPRIVKK.

Residues A3 to F23 traverse the membrane as a helical segment.

This sequence belongs to the PsbT family. PSII is composed of 1 copy each of membrane proteins PsbA, PsbB, PsbC, PsbD, PsbE, PsbF, PsbH, PsbI, PsbJ, PsbK, PsbL, PsbM, PsbT, PsbX, PsbY, PsbZ, Psb30/Ycf12, at least 3 peripheral proteins of the oxygen-evolving complex and a large number of cofactors. It forms dimeric complexes.

The protein localises to the plastid. The protein resides in the chloroplast thylakoid membrane. Its function is as follows. Found at the monomer-monomer interface of the photosystem II (PS II) dimer, plays a role in assembly and dimerization of PSII. PSII is a light-driven water plastoquinone oxidoreductase, using light energy to abstract electrons from H(2)O, generating a proton gradient subsequently used for ATP formation. This Emiliania huxleyi (Coccolithophore) protein is Photosystem II reaction center protein T.